The following is a 498-amino-acid chain: L-amino acid oxidase Bs29 (498 aa).

The signal sequence occupies residues 1–3 (SCA). A disulfide bond links Cys-12 and Cys-175. FAD-binding positions include 45-46 (MS), 65-66 (EA), Arg-73, and 89-92 (GPMR). Arg-92 contacts substrate. An N-linked (GlcNAc...) asparagine glycan is attached at Asn-174. Residue His-225 coordinates substrate. An FAD-binding site is contributed by Val-263. The cysteines at positions 333 and 414 are disulfide-linked. Tyr-374 contacts substrate. FAD-binding positions include Glu-459 and 466–471 (GWIDST). A substrate-binding site is contributed by 466–467 (GW).

The protein belongs to the flavin monoamine oxidase family. FIG1 subfamily. As to quaternary structure, monomer. This is in contrast with most of its orthologs, that are non-covalently linked homodimers. FAD is required as a cofactor. In terms of tissue distribution, expressed by the venom gland.

It is found in the secreted. The catalysed reaction is an L-alpha-amino acid + O2 + H2O = a 2-oxocarboxylate + H2O2 + NH4(+). It carries out the reaction L-leucine + O2 + H2O = 4-methyl-2-oxopentanoate + H2O2 + NH4(+). Catalyzes an oxidative deamination of predominantly hydrophobic and aromatic L-amino acids, thus producing hydrogen peroxide that may contribute to the diverse toxic effects of this enzyme. Shows activity on L-Leu. Damage cell membranes of the Gram-positive bacteria S.aureus (MIC=4 ug/ml and MBC=8 ug/ml) and the Gram-negative bacteria A.baumanni (MIC=2 ug/ml and MBC=4 ug/ml). This antibacterial activity is dependent on the production of hydrogen peroxyde, since it is inhibited by catalase, a hydrogen peroxyde scavenger. This is L-amino acid oxidase Bs29 from Bothriechis schlegelii (Eyelash palm pitviper).